We begin with the raw amino-acid sequence, 179 residues long: Large ribosomal subunit protein uL6 (179 aa).

The protein belongs to the universal ribosomal protein uL6 family. As to quaternary structure, part of the 50S ribosomal subunit.

In terms of biological role, this protein binds to the 23S rRNA, and is important in its secondary structure. It is located near the subunit interface in the base of the L7/L12 stalk, and near the tRNA binding site of the peptidyltransferase center. The protein is Large ribosomal subunit protein uL6 of Legionella pneumophila (strain Paris).